Here is a 389-residue protein sequence, read N- to C-terminus: Trans-2-enoyl-CoA reductase [NADH] (389 aa).

NAD(+) contacts are provided by residues 47–52 (GASTGY), 73–74 (FE), 110–111 (DA), and 138–139 (LA). Tyrosine 224 contacts substrate. Tyrosine 234 functions as the Proton donor in the catalytic mechanism. NAD(+)-binding positions include lysine 243 and 272 to 274 (LVT).

This sequence belongs to the TER reductase family. Monomer.

The catalysed reaction is a 2,3-saturated acyl-CoA + NAD(+) = a (2E)-enoyl-CoA + NADH + H(+). It participates in lipid metabolism; fatty acid biosynthesis. In terms of biological role, involved in the fatty acid synthesis (FAS II). Catalyzes the reduction of a carbon-carbon double bond in an enoyl moiety that is covalently linked to a coenzyme A (CoA). The sequence is that of Trans-2-enoyl-CoA reductase [NADH] from Clostridium perfringens (strain 13 / Type A).